Here is a 378-residue protein sequence, read N- to C-terminus: MFGRFIRQYSTSKNIINVNELIVEKTKTPFQKYTDKTKLVFGKQFSDHMIEVQWTKEEGWGVPKISGYHNLSIPPSASVLHYALECFEGMKAYKDSNGKIRLFRPDQNMNRFLNSAKRICLPEFNKEAVIELIKKLCVLDKDWIPEGKGYSLYLRPTLIATQNSLGVGASNSALMFVIASPVGPYYPEGFKPVKLIADDQYVRAWAGGSGAFKLGSNYAPTIFPQLEAAKKGFSQVLWLLNDYVTEVGTMNMFVFWNNAQGEKELITPPLGDGTILPGVTRDSILKLTQQWGEFKITEKNFTMTELAKAIKEGRVFEAFGAGTAAIVSPIESISYKGENYSIPIDASLNCGPLTKRISDSIMAIQYGETNSDWSVIVD.

An N6-(pyridoxal phosphate)lysine modification is found at Lys-213.

This sequence belongs to the class-IV pyridoxal-phosphate-dependent aminotransferase family. As to quaternary structure, homodimer. Pyridoxal 5'-phosphate is required as a cofactor.

It catalyses the reaction L-leucine + 2-oxoglutarate = 4-methyl-2-oxopentanoate + L-glutamate. The catalysed reaction is L-isoleucine + 2-oxoglutarate = (S)-3-methyl-2-oxopentanoate + L-glutamate. It carries out the reaction L-valine + 2-oxoglutarate = 3-methyl-2-oxobutanoate + L-glutamate. In terms of biological role, catalyzes the first reaction in the catabolism of the essential branched chain amino acids leucine, isoleucine, and valine. This Dictyostelium discoideum (Social amoeba) protein is Branched-chain-amino-acid aminotransferase (bcaA).